The primary structure comprises 449 residues: UMP-CMP kinase 2, mitochondrial (449 aa).

The transit peptide at 1 to 98 (MAFARRLLRG…VRAARLHQRL (98 aa)) directs the protein to the mitochondrion. ATP is bound at residue 259–266 (GLDATGKT). A coiled-coil region spans residues 380 to 412 (EERLQRLQGRGMEKTREEAELEANSVFRQKVEM).

This sequence belongs to the thymidylate kinase family. High levels are observed in myeloid, lymphoid and mesenchymal tissues.

It is found in the mitochondrion. The enzyme catalyses CMP + ATP = CDP + ADP. It carries out the reaction dCMP + ATP = dCDP + ADP. The catalysed reaction is a 2'-deoxyribonucleoside 5'-diphosphate + ATP = a 2'-deoxyribonucleoside 5'-triphosphate + ADP. It catalyses the reaction a ribonucleoside 5'-diphosphate + ATP = a ribonucleoside 5'-triphosphate + ADP. In terms of biological role, mitochondrial nucleotide monophosphate kinase needed for salvage dNTP synthesis that mediates immunomodulatory and antiviral activities through IFN-dependent and IFN-independent pathways. Restricts the replication of multiple viruses including flaviviruses or coronaviruses. Together with viperin/RSAD2 and ddhCTP, suppresses the replication of several coronaviruses through inhibition of the viral RNA-dependent RNA polymerase activities. Concerning flaviviruses, restricts RNA translation when localized to the mitochondria independently of its kinase activity. Is able to phosphorylate dUMP, dCMP, CMP, UMP and monophosphates of the pyrimidine nucleoside analogs ddC, dFdC, araC, BVDU and FdUrd with ATP as phosphate donor. Efficacy is highest for dUMP followed by dCMP while CMP and UMP are poor substrates. Controls therefore mitochondrial DNA synthesis by supplying required deoxyribonucleotides. CMPK2-dependent mitochondrial DNA synthesis is necessary for the production of oxidized mitochondrial DNA fragments after exposure to NLRP3 activators. In turn, cytosolic oxidized mtDNA associates with the NLRP3 inflammasome complex and is required for its activation. The protein is UMP-CMP kinase 2, mitochondrial (CMPK2) of Homo sapiens (Human).